We begin with the raw amino-acid sequence, 947 residues long: Bifunctional glutamine synthetase adenylyltransferase/adenylyl-removing enzyme (947 aa).

Residues M1 to E440 form an adenylyl removase region. The interval S450–V947 is adenylyl transferase.

It belongs to the GlnE family. Mg(2+) serves as cofactor.

The catalysed reaction is [glutamine synthetase]-O(4)-(5'-adenylyl)-L-tyrosine + phosphate = [glutamine synthetase]-L-tyrosine + ADP. It catalyses the reaction [glutamine synthetase]-L-tyrosine + ATP = [glutamine synthetase]-O(4)-(5'-adenylyl)-L-tyrosine + diphosphate. In terms of biological role, involved in the regulation of glutamine synthetase GlnA, a key enzyme in the process to assimilate ammonia. When cellular nitrogen levels are high, the C-terminal adenylyl transferase (AT) inactivates GlnA by covalent transfer of an adenylyl group from ATP to specific tyrosine residue of GlnA, thus reducing its activity. Conversely, when nitrogen levels are low, the N-terminal adenylyl removase (AR) activates GlnA by removing the adenylyl group by phosphorolysis, increasing its activity. The regulatory region of GlnE binds the signal transduction protein PII (GlnB) which indicates the nitrogen status of the cell. This Salmonella paratyphi C (strain RKS4594) protein is Bifunctional glutamine synthetase adenylyltransferase/adenylyl-removing enzyme.